The sequence spans 349 residues: N-acetyltaurine hydrolase (349 aa).

A divalent metal cation contacts are provided by His-26, His-28, Glu-169, His-201, His-230, and Asp-298.

It belongs to the metallo-dependent hydrolases superfamily. Phosphotriesterase family. A divalent metal cation is required as a cofactor.

Its subcellular location is the cytoplasm. The protein resides in the cytosol. It carries out the reaction N-acetyltaurine + H2O = taurine + acetate. The catalysed reaction is N-propanoyltaurine + H2O = propanoate + taurine. The enzyme catalyses N-acetyl-L-methionine + H2O = L-methionine + acetate. It catalyses the reaction N-acetyl-L-isoleucine + H2O = L-isoleucine + acetate. It carries out the reaction N-acetyl-L-leucine + H2O = L-leucine + acetate. The catalysed reaction is N-acetyl-L-valine + H2O = L-valine + acetate. Its function is as follows. N-acetyltaurine hydrolase that catalyzes the hydrolysis of N-acetyltaurine into taurine and acetate. PTER also acts on other N-acetyl amino acids (Met, Ile, Leu, Val) and N-propionyltaurine, but at lower rates. The protein is N-acetyltaurine hydrolase (pter) of Tetraodon nigroviridis (Spotted green pufferfish).